The following is a 166-amino-acid chain: CDP-archaeol synthase (166 aa).

5 helical membrane passes run 7 to 27 (LLLS…GPFI), 55 to 75 (LIVA…FFTA), 78 to 98 (TLIS…GAFI), 116 to 136 (LDFV…ITWY), and 138 to 158 (FLFI…VAYL).

Belongs to the CDP-archaeol synthase family. Requires Mg(2+) as cofactor.

The protein localises to the cell membrane. It catalyses the reaction 2,3-bis-O-(geranylgeranyl)-sn-glycerol 1-phosphate + CTP + H(+) = CDP-2,3-bis-O-(geranylgeranyl)-sn-glycerol + diphosphate. Its pathway is membrane lipid metabolism; glycerophospholipid metabolism. Functionally, catalyzes the formation of CDP-2,3-bis-(O-geranylgeranyl)-sn-glycerol (CDP-archaeol) from 2,3-bis-(O-geranylgeranyl)-sn-glycerol 1-phosphate (DGGGP) and CTP. This reaction is the third ether-bond-formation step in the biosynthesis of archaeal membrane lipids. The polypeptide is CDP-archaeol synthase (Saccharolobus islandicus (strain Y.N.15.51 / Yellowstone #2) (Sulfolobus islandicus)).